The sequence spans 887 residues: Bifunctional uridylyltransferase/uridylyl-removing enzyme (887 aa).

Residues Met1 to Glu337 form a uridylyltransferase region. The segment at Val339–Val699 is uridylyl-removing. Positions Val457–Leu579 constitute an HD domain. ACT domains are found at residues Gln700–Arg782 and Met809–His887.

It belongs to the GlnD family. Requires Mg(2+) as cofactor.

It carries out the reaction [protein-PII]-L-tyrosine + UTP = [protein-PII]-uridylyl-L-tyrosine + diphosphate. It catalyses the reaction [protein-PII]-uridylyl-L-tyrosine + H2O = [protein-PII]-L-tyrosine + UMP + H(+). Its activity is regulated as follows. Uridylyltransferase (UTase) activity is inhibited by glutamine, while glutamine activates uridylyl-removing (UR) activity. In terms of biological role, modifies, by uridylylation and deuridylylation, the PII regulatory proteins (GlnB and homologs), in response to the nitrogen status of the cell that GlnD senses through the glutamine level. Under low glutamine levels, catalyzes the conversion of the PII proteins and UTP to PII-UMP and PPi, while under higher glutamine levels, GlnD hydrolyzes PII-UMP to PII and UMP (deuridylylation). Thus, controls uridylylation state and activity of the PII proteins, and plays an important role in the regulation of nitrogen assimilation and metabolism. This is Bifunctional uridylyltransferase/uridylyl-removing enzyme from Acinetobacter baumannii (strain ATCC 17978 / DSM 105126 / CIP 53.77 / LMG 1025 / NCDC KC755 / 5377).